Reading from the N-terminus, the 178-residue chain is ATP-dependent protease subunit HslV (178 aa).

The active site involves Thr-7. Positions 162, 165, and 168 each coordinate Na(+).

This sequence belongs to the peptidase T1B family. HslV subfamily. A double ring-shaped homohexamer of HslV is capped on each side by a ring-shaped HslU homohexamer. The assembly of the HslU/HslV complex is dependent on binding of ATP.

The protein localises to the cytoplasm. The enzyme catalyses ATP-dependent cleavage of peptide bonds with broad specificity.. With respect to regulation, allosterically activated by HslU binding. Its function is as follows. Protease subunit of a proteasome-like degradation complex believed to be a general protein degrading machinery. In Azoarcus sp. (strain BH72), this protein is ATP-dependent protease subunit HslV.